Reading from the N-terminus, the 178-residue chain is uncharacterized protein (178 aa).

This is an uncharacterized protein from Rhizobium fredii (Sinorhizobium fredii).